Here is a 334-residue protein sequence, read N- to C-terminus: L-lactate dehydrogenase B chain (334 aa).

30–58 (GQVGMACAVSVLLKELADELALVDILEDK) contributes to the NAD(+) binding site. Residues R107, N139, and R170 each contribute to the substrate site. NAD(+) is bound at residue N139. H194 serves as the catalytic Proton acceptor. T249 contacts substrate.

It belongs to the LDH/MDH superfamily. LDH family. In terms of assembly, homotetramer.

The protein localises to the cytoplasm. The enzyme catalyses (S)-lactate + NAD(+) = pyruvate + NADH + H(+). It functions in the pathway fermentation; pyruvate fermentation to lactate; (S)-lactate from pyruvate: step 1/1. In terms of biological role, interconverts simultaneously and stereospecifically pyruvate and lactate with concomitant interconversion of NADH and NAD(+). The sequence is that of L-lactate dehydrogenase B chain (ldhb) from Xenopus laevis (African clawed frog).